The following is a 959-amino-acid chain: MAPLSAALLPWHGVCVPVCYGESRILRVKVVSGIDLAKKDIFGASDPYVKLSLYVADENRELALVQTKTIKKTLNPKWNEEFYFRVNPSNHRLLFEVFDENRLTRDDFLGQVDVPLSHLPTEDPTMERPYTFKDFLLRPRSHKSRVKGFLRLKMAYMPKNGGQEEENSEQRDDMEHGWEVVDSNDSASQHQEELPPPPLPPGWEEKVDNLGRTYYVNHNNRTTQWHRPSLMDVSSESDNNIRQINQEAAHRRFRSRRHISEDLEPEPSEGGDVPEPWETISEEVNIAGDSLGLALPPPPASPGSRTSPQELSEELSRRLQITPDSNGEQFSSLIQREPSSRLRSCSVTDAVAEQGHLPPPSVAYVHTTPGLPSGWEERKDAKGRTYYVNHNNRTTTWTRPIMQLAEDGASGSATNSNNHLIEPQIRRPRSLSSPTVTLSAPLEGAKDSPVRRAVKDTLSNPQSPQPSPYNSPKPQHKVTQSFLPPGWEMRIAPNGRPFFIDHNTKTTTWEDPRLKFPVHMRSKTSLNPNDLGPLPPGWEERIHLDGRTFYIDHNSKITQWEDPRLQNPAITGPAVPYSREFKQKYDYFRKKLKKPADIPNRFEMKLHRNNIFEESYRRIMSVKRPDVLKARLWIEFESEKGLDYGGVAREWFFLLSKEMFNPYYGLFEYSATDNYTLQINPNSGLCNEDHLSYFTFIGRVAGLAVFHGKLLDGFFIRPFYKMMLGKQITLNDMESVDSEYYNSLKWILENDPTELDLMFCIDEENFGQTYQVDLEPNGSEIMVTNENKREYIDLVIQWRFVNRVQKQMNAFLEGFTELLPIDLIKIFDENELELLMCGLGDVDVNDWRQHSIYKNGYCPNHPVIQWFWKAVLLMDAEKRIRLLQFVTGTSRVPMNGFAELYGSNGPQLFTIEQWGSPEKLPRAHTCFNRLDLPPYETFEDLREKLLMAVENAQGFEGVD.

A C2 domain is found at 10–130 (PWHGVCVPVC…TEDPTMERPY (121 aa)). 3 disordered regions span residues 183-206 (SNDS…WEEK), 248-275 (AAHR…DVPE), and 289-316 (DSLG…EELS). The 34-residue stretch at 197–230 (PPLPPGWEEKVDNLGRTYYVNHNNRTTQWHRPSL) folds into the WW 1 domain. The residue at position 316 (serine 316) is a Phosphoserine. Position 322 is a phosphothreonine (threonine 322). Phosphoserine; by WNK1 and WNK4 is present on serine 346. One can recognise a WW 2 domain in the interval 369 to 402 (PGLPSGWEERKDAKGRTYYVNHNNRTTTWTRPIM). Residues 408–478 (GASGSATNSN…YNSPKPQHKV (71 aa)) form a disordered region. Position 430 is a phosphoserine (serine 430). Serine 432 is modified (phosphoserine; by SGK1). Position 433 is a phosphoserine; by WNK1 and WNK4 (serine 433). The segment covering 444–455 (GAKDSPVRRAVK) has biased composition (basic and acidic residues). Serine 448 carries the post-translational modification Phosphoserine; by SGK1. 4 positions are modified to phosphoserine: serine 459, serine 463, serine 467, and serine 471. WW domains are found at residues 481–514 (SFLP…DPRL) and 532–565 (GPLP…DPRL). An HECT domain is found at 624 to 958 (RPDVLKARLW…VENAQGFEGV (335 aa)). Cysteine 926 functions as the Glycyl thioester intermediate in the catalytic mechanism.

In terms of assembly, interacts with UBE2E3. Interacts with NDFIP1; this interaction activates the E3 ubiquitin-protein ligase. Interacts with NDFIP2; this interaction activates the E3 ubiquitin-protein ligase. Interacts (via WW domains) with SCN1A. Interacts (via WW domains) with SCN2A. Interacts (via WW domains) with SCN3A. Interacts (via WW domains) with SCN5A. Interacts (via WW domains) with SCN8A. Interacts (via WW domains) with SCN9A. Interacts (via WW domains) with SCN10A. Interacts (via WW domains) with CLCN5. Interacts with SMAD2. Interacts with SMAD3. Interacts with SMAD6. Interacts with SMAD7. The phosphorylated form interacts with 14-3-3 proteins. Interacts with TNK2. Interacts with WNK1. Interacts with SGK1. Interacts (via C2 domain) with NPC2. Interacts with ARRDC4. Interacts with KCNQ1; promotes internalization of KCNQ1. Interacts (via domains WW1, 3 and 4) with USP36; the interaction inhibits ubiquitination of, at least, NTRK1, KCNQ2 and KCNQ3 by NEDD4L. Interacts with PRRG4 (via cytoplasmic domain). Interacts with LDLRAD3; the interaction is direct. Interacts with TTYH2 and TTYH3. In terms of processing, phosphorylated; which impairs interaction with SCNN. Interaction with YWHAH inhibits dephosphorylation. Post-translationally, auto-ubiquitinated.

The protein localises to the cytoplasm. It localises to the golgi apparatus. It is found in the endosome. The protein resides in the multivesicular body. It carries out the reaction S-ubiquitinyl-[E2 ubiquitin-conjugating enzyme]-L-cysteine + [acceptor protein]-L-lysine = [E2 ubiquitin-conjugating enzyme]-L-cysteine + N(6)-ubiquitinyl-[acceptor protein]-L-lysine.. It functions in the pathway protein modification; protein ubiquitination. With respect to regulation, activated by NDFIP1- and NDFIP2-binding. In terms of biological role, E3 ubiquitin-protein ligase which accepts ubiquitin from an E2 ubiquitin-conjugating enzyme in the form of a thioester and then directly transfers the ubiquitin to targeted substrates. Inhibits TGF-beta signaling by triggering SMAD2 and TGFBR1 ubiquitination and proteasome-dependent degradation. Promotes ubiquitination and internalization of various plasma membrane channels such as ENaC, Nav1.2, Nav1.3, Nav1.5, Nav1.7, Nav1.8, Kv1.3, KCNH2, EAAT1 or CLC5. Promotes ubiquitination and degradation of SGK1 and TNK2. Ubiquitinates BRAT1 and this ubiquitination is enhanced in the presence of NDFIP1. Plays a role in dendrite formation by melanocytes. Involved in the regulation of TOR signaling. Ubiquitinates TTYH2 and TTYH3 and regulates protein levels of TTYH2. The polypeptide is E3 ubiquitin-protein ligase NEDD4-like (NEDD4L) (Pongo abelii (Sumatran orangutan)).